A 340-amino-acid polypeptide reads, in one-letter code: Phosphoribosylformylglycinamidine cyclo-ligase (340 aa).

It belongs to the AIR synthase family.

The protein localises to the cytoplasm. It catalyses the reaction 2-formamido-N(1)-(5-O-phospho-beta-D-ribosyl)acetamidine + ATP = 5-amino-1-(5-phospho-beta-D-ribosyl)imidazole + ADP + phosphate + H(+). It functions in the pathway purine metabolism; IMP biosynthesis via de novo pathway; 5-amino-1-(5-phospho-D-ribosyl)imidazole from N(2)-formyl-N(1)-(5-phospho-D-ribosyl)glycinamide: step 2/2. The sequence is that of Phosphoribosylformylglycinamidine cyclo-ligase from Streptococcus pneumoniae (strain P1031).